The primary structure comprises 1025 residues: Exportin-T (1025 aa).

The protein belongs to the exportin family.

The protein localises to the nucleus. It localises to the cytoplasm. TRNA nucleus export receptor which facilitates tRNA translocation across the nuclear pore complex. Involved in pre-tRNA splicing, probably by affecting the interaction of pre-tRNA with splicing endonuclease. This Yarrowia lipolytica (strain CLIB 122 / E 150) (Yeast) protein is Exportin-T (LOS1).